The following is a 369-amino-acid chain: MKLLSLAVQDFRNLAQVELLPSPRATVLLGENGQGKTNLLEAIYFLTTLKPLRTARLAELVRHGAQTGLVAGDFDGPGGTRRVAVQVAPGGRVALLDGKPQERLDAYFDGLAAVCFAPDDLLLVKGGPEGRRRFLDRAAFNRWPAVLGEAREYVRALRARNAALRGGSPEVEASFRGPLVRAGARIVRRRRDLVEELAPRVSTAFREISGPAAPEARFAYRPAAGVQAEVGEAELAERLEHALAQRLERDRDRGFTSVGPHMDELVLALDGRGARAYASQGQQRALVLALKIAEIENLRAALGRPPLLLLDDVSSELDPTKNRYLLAYLAALPAQAFLTTTDRRLIEPAAGPDTAFYKVEGGMVSPLIS.

Residue 30–37 participates in ATP binding; it reads GENGQGKT.

Belongs to the RecF family.

It localises to the cytoplasm. Its function is as follows. The RecF protein is involved in DNA metabolism; it is required for DNA replication and normal SOS inducibility. RecF binds preferentially to single-stranded, linear DNA. It also seems to bind ATP. In Anaeromyxobacter sp. (strain Fw109-5), this protein is DNA replication and repair protein RecF.